A 567-amino-acid chain; its full sequence is Proline--tRNA ligase (567 aa).

This sequence belongs to the class-II aminoacyl-tRNA synthetase family. ProS type 1 subfamily. In terms of assembly, homodimer.

The protein localises to the cytoplasm. It catalyses the reaction tRNA(Pro) + L-proline + ATP = L-prolyl-tRNA(Pro) + AMP + diphosphate. Functionally, catalyzes the attachment of proline to tRNA(Pro) in a two-step reaction: proline is first activated by ATP to form Pro-AMP and then transferred to the acceptor end of tRNA(Pro). As ProRS can inadvertently accommodate and process non-cognate amino acids such as alanine and cysteine, to avoid such errors it has two additional distinct editing activities against alanine. One activity is designated as 'pretransfer' editing and involves the tRNA(Pro)-independent hydrolysis of activated Ala-AMP. The other activity is designated 'posttransfer' editing and involves deacylation of mischarged Ala-tRNA(Pro). The misacylated Cys-tRNA(Pro) is not edited by ProRS. In Campylobacter fetus subsp. fetus (strain 82-40), this protein is Proline--tRNA ligase.